A 310-amino-acid chain; its full sequence is Calbindin-32 (310 aa).

EF-hand domains follow at residues 35 to 70, 84 to 120, 131 to 166, 177 to 212, 224 to 259, and 283 to 304; these read LSAN…FVSS, TMLE…EENF, ESSV…LLKE, KLIE…KENF, LTKE…LLEL, and TDKH…LAKI. Aspartate 48, aspartate 50, asparagine 52, tyrosine 54, glutamate 59, aspartate 98, asparagine 100, aspartate 102, lysine 104, glutamate 109, aspartate 144, aspartate 146, serine 148, tyrosine 150, glutamate 155, aspartate 190, asparagine 192, aspartate 194, arginine 196, glutamate 201, aspartate 237, aspartate 239, serine 241, threonine 243, and glutamate 248 together coordinate Ca(2+).

Belongs to the calbindin family. As to expression, expressed in a large number of neuron of the brain and the thoracic ganglion as well as in two small muscles of the thorax.

This chain is Calbindin-32 (Cbp53E), found in Drosophila melanogaster (Fruit fly).